A 1459-amino-acid polypeptide reads, in one-letter code: Mediator of RNA polymerase II transcription subunit 14 (1459 aa).

The interval 1–37 (MAPVQLDNHQLIPPGGGGGSSGGGGSSSGSASAPAPP) is disordered. Residues 14–27 (PGGGGGSSGGGGSS) show a composition bias toward gly residues. The LXXLL motif 1 motif lies at 75-79 (LTDLL). An interaction with STAT2 region spans residues 194–572 (KQATLHQLNQ…VPNKPTQLSY (379 aa)). The segment at 506–830 (LGQQRCKQSI…TKGSSISIQW (325 aa)) is interaction with SREBF1. Phosphoserine occurs at positions 623 and 992. Positions 979–1171 (ARRRSVNEDD…NMPPPRKLPQ (193 aa)) are disordered. Composition is skewed to polar residues over residues 1029–1059 (PPTSYHSTVNQSPSMMHTQSPGNLHAASSPS) and 1097–1106 (DPSSPYTMVS). A phosphoserine mark is found at serine 1117, serine 1124, serine 1133, serine 1141, and serine 1149. Residues 1152–1161 (AGTSSQTMPT) are compositionally biased toward polar residues. The LXXLL motif 2 motif lies at 1187 to 1191 (LNILL).

This sequence belongs to the Mediator complex subunit 14 family. As to quaternary structure, component of the Mediator complex, which is composed of MED1, MED4, MED6, MED7, MED8, MED9, MED10, MED11, MED12, MED13, MED13L, MED14, MED15, MED16, MED17, MED18, MED19, MED20, MED21, MED22, MED23, MED24, MED25, MED26, MED27, MED29, MED30, MED31, CCNC, CDK8 and CDC2L6/CDK11. The MED12, MED13, CCNC and CDK8 subunits form a distinct module termed the CDK8 module. Mediator containing the CDK8 module is less active than Mediator lacking this module in supporting transcriptional activation. Individual preparations of the Mediator complex lacking one or more distinct subunits have been variously termed ARC, CRSP, DRIP, PC2, SMCC and TRAP. Interacts with AR, ESR1, SREBF1 and STAT2. Interacts with GATA1.

It is found in the nucleus. In terms of biological role, component of the Mediator complex, a coactivator involved in the regulated transcription of nearly all RNA polymerase II-dependent genes. Mediator functions as a bridge to convey information from gene-specific regulatory proteins to the basal RNA polymerase II transcription machinery. Mediator is recruited to promoters by direct interactions with regulatory proteins and serves as a scaffold for the assembly of a functional preinitiation complex with RNA polymerase II and the general transcription factors. This Mus musculus (Mouse) protein is Mediator of RNA polymerase II transcription subunit 14 (Med14).